The sequence spans 70 residues: DNA-directed RNA polymerase subunit epsilon (70 aa).

The protein belongs to the RNA polymerase subunit epsilon family. As to quaternary structure, RNAP is composed of a core of 2 alpha, a beta and a beta' subunit. The core is associated with a delta subunit, and at least one of epsilon or omega. When a sigma factor is associated with the core the holoenzyme is formed, which can initiate transcription.

The catalysed reaction is RNA(n) + a ribonucleoside 5'-triphosphate = RNA(n+1) + diphosphate. A non-essential component of RNA polymerase (RNAP). This chain is DNA-directed RNA polymerase subunit epsilon, found in Bacillus mycoides (strain KBAB4) (Bacillus weihenstephanensis).